A 456-amino-acid polypeptide reads, in one-letter code: Bifunctional protein GlmU (456 aa).

The pyrophosphorylase stretch occupies residues 1-229 (MLNNAMSVVI…LSEVEGVNNR (229 aa)). Residues 11 to 14 (LAAG), Lys-25, Gln-76, 81 to 82 (GT), 103 to 105 (YGD), Gly-140, Glu-154, Asn-169, and Asn-227 each bind UDP-N-acetyl-alpha-D-glucosamine. Asp-105 contributes to the Mg(2+) binding site. Residue Asn-227 coordinates Mg(2+). The tract at residues 230–250 (LQLSRLERVYQSEQAEKLLLA) is linker. The interval 251-456 (GVMLRDPARF…EGWRRPVKKK (206 aa)) is N-acetyltransferase. The UDP-N-acetyl-alpha-D-glucosamine site is built by Arg-333 and Lys-351. His-363 acts as the Proton acceptor in catalysis. Positions 366 and 377 each coordinate UDP-N-acetyl-alpha-D-glucosamine. Residues Ala-380, 386–387 (NY), Ser-405, Ala-423, and Arg-440 each bind acetyl-CoA.

In the N-terminal section; belongs to the N-acetylglucosamine-1-phosphate uridyltransferase family. It in the C-terminal section; belongs to the transferase hexapeptide repeat family. As to quaternary structure, homotrimer. The cofactor is Mg(2+).

The protein localises to the cytoplasm. The catalysed reaction is alpha-D-glucosamine 1-phosphate + acetyl-CoA = N-acetyl-alpha-D-glucosamine 1-phosphate + CoA + H(+). It catalyses the reaction N-acetyl-alpha-D-glucosamine 1-phosphate + UTP + H(+) = UDP-N-acetyl-alpha-D-glucosamine + diphosphate. The protein operates within nucleotide-sugar biosynthesis; UDP-N-acetyl-alpha-D-glucosamine biosynthesis; N-acetyl-alpha-D-glucosamine 1-phosphate from alpha-D-glucosamine 6-phosphate (route II): step 2/2. It functions in the pathway nucleotide-sugar biosynthesis; UDP-N-acetyl-alpha-D-glucosamine biosynthesis; UDP-N-acetyl-alpha-D-glucosamine from N-acetyl-alpha-D-glucosamine 1-phosphate: step 1/1. It participates in bacterial outer membrane biogenesis; LPS lipid A biosynthesis. Catalyzes the last two sequential reactions in the de novo biosynthetic pathway for UDP-N-acetylglucosamine (UDP-GlcNAc). The C-terminal domain catalyzes the transfer of acetyl group from acetyl coenzyme A to glucosamine-1-phosphate (GlcN-1-P) to produce N-acetylglucosamine-1-phosphate (GlcNAc-1-P), which is converted into UDP-GlcNAc by the transfer of uridine 5-monophosphate (from uridine 5-triphosphate), a reaction catalyzed by the N-terminal domain. The protein is Bifunctional protein GlmU of Escherichia coli O157:H7 (strain EC4115 / EHEC).